Consider the following 366-residue polypeptide: GTP-binding protein 10 (366 aa).

The 136-residue stretch at 13–148 (GNFIDNLRIF…RIVHLDLKVI (136 aa)) folds into the Obg domain. Residues 149 to 344 (ADVGLVGFPN…LKSCIRKALD (196 aa)) form the OBG-type G domain. Residues 155 to 162 (GFPNAGKS), 202 to 206 (DLPGL), and 278 to 281 (NKMD) each bind GTP. Residues 346–355 (QDGKESDAHR) are compositionally biased toward basic and acidic residues. The tract at residues 346–366 (QDGKESDAHRSKQLLNLQSSS) is disordered.

The protein belongs to the TRAFAC class OBG-HflX-like GTPase superfamily. OBG GTPase family.

It localises to the nucleus. It is found in the nucleolus. In terms of biological role, may be involved in the ribosome maturation process. This chain is GTP-binding protein 10 (Gtpbp10), found in Mus musculus (Mouse).